We begin with the raw amino-acid sequence, 445 residues long: Argininosuccinate synthase (445 aa).

ATP is bound by residues 17–25 (AFSGGLDTS) and alanine 43. An L-citrulline-binding site is contributed by tyrosine 99. The ATP site is built by glycine 129 and threonine 131. L-aspartate-binding residues include threonine 131, asparagine 135, and aspartate 136. Asparagine 135 is an L-citrulline binding site. Position 136 (aspartate 136) interacts with ATP. L-citrulline is bound by residues arginine 139 and serine 192. Aspartate 194 is an ATP binding site. L-citrulline-binding residues include threonine 201, glutamate 203, and glutamate 280.

Belongs to the argininosuccinate synthase family. Type 2 subfamily. In terms of assembly, homotetramer.

It is found in the cytoplasm. The catalysed reaction is L-citrulline + L-aspartate + ATP = 2-(N(omega)-L-arginino)succinate + AMP + diphosphate + H(+). It functions in the pathway amino-acid biosynthesis; L-arginine biosynthesis; L-arginine from L-ornithine and carbamoyl phosphate: step 2/3. The protein is Argininosuccinate synthase of Bradyrhizobium sp. (strain BTAi1 / ATCC BAA-1182).